Consider the following 375-residue polypeptide: Anhydro-N-acetylmuramic acid kinase (375 aa).

Position 18-25 (18-25 (GTSMDGID)) interacts with ATP.

This sequence belongs to the anhydro-N-acetylmuramic acid kinase family.

The enzyme catalyses 1,6-anhydro-N-acetyl-beta-muramate + ATP + H2O = N-acetyl-D-muramate 6-phosphate + ADP + H(+). The protein operates within amino-sugar metabolism; 1,6-anhydro-N-acetylmuramate degradation. It functions in the pathway cell wall biogenesis; peptidoglycan recycling. Functionally, catalyzes the specific phosphorylation of 1,6-anhydro-N-acetylmuramic acid (anhMurNAc) with the simultaneous cleavage of the 1,6-anhydro ring, generating MurNAc-6-P. Is required for the utilization of anhMurNAc either imported from the medium or derived from its own cell wall murein, and thus plays a role in cell wall recycling. This chain is Anhydro-N-acetylmuramic acid kinase, found in Rhodospirillum rubrum (strain ATCC 11170 / ATH 1.1.1 / DSM 467 / LMG 4362 / NCIMB 8255 / S1).